The primary structure comprises 275 residues: Nitrogenase iron protein 1 (275 aa).

9-16 (GKGGIGKS) is an ATP binding site. Cys97 is a [4Fe-4S] cluster binding site. Arg100 carries the ADP-ribosylarginine; by dinitrogenase reductase ADP-ribosyltransferase modification. A [4Fe-4S] cluster-binding site is contributed by Cys132.

The protein belongs to the NifH/BchL/ChlL family. Homodimer. The cofactor is [4Fe-4S] cluster. Post-translationally, the reversible ADP-ribosylation of Arg-100 inactivates the nitrogenase reductase and regulates nitrogenase activity.

It carries out the reaction N2 + 8 reduced [2Fe-2S]-[ferredoxin] + 16 ATP + 16 H2O = H2 + 8 oxidized [2Fe-2S]-[ferredoxin] + 2 NH4(+) + 16 ADP + 16 phosphate + 6 H(+). Functionally, the key enzymatic reactions in nitrogen fixation are catalyzed by the nitrogenase complex, which has 2 components: the iron protein and the molybdenum-iron protein. This is Nitrogenase iron protein 1 (nifH1) from Methanothermobacter thermautotrophicus (strain ATCC 29096 / DSM 1053 / JCM 10044 / NBRC 100330 / Delta H) (Methanobacterium thermoautotrophicum).